We begin with the raw amino-acid sequence, 190 residues long: Recombination protein RecR (190 aa).

Residues 58-73 (CEQCGALSENELCEIC) form a C4-type zinc finger. The region spanning 81–167 (NILCIVESPK…TFSKIAQGIP (87 aa)) is the Toprim domain.

The protein belongs to the RecR family.

In terms of biological role, may play a role in DNA repair. It seems to be involved in an RecBC-independent recombinational process of DNA repair. It may act with RecF and RecO. The polypeptide is Recombination protein RecR (Campylobacter jejuni subsp. jejuni serotype O:23/36 (strain 81-176)).